Consider the following 154-residue polypeptide: Endoribonuclease YbeY (154 aa).

Residues histidine 113, histidine 117, and histidine 123 each contribute to the Zn(2+) site.

Belongs to the endoribonuclease YbeY family. The cofactor is Zn(2+).

The protein localises to the cytoplasm. Functionally, single strand-specific metallo-endoribonuclease involved in late-stage 70S ribosome quality control and in maturation of the 3' terminus of the 16S rRNA. The sequence is that of Endoribonuclease YbeY from Vibrio vulnificus (strain YJ016).